Reading from the N-terminus, the 1317-residue chain is Nucleoporin NUP145 (1317 aa).

Residues 1-16 show a composition bias toward polar residues; that stretch reads MFNKSVNSGFTFGNQN. A disordered region spans residues 1–36; it reads MFNKSVNSGFTFGNQNTSTPTSTPAQPSSSLQFPQK. The FG 1 repeat unit spans residues 12-13; sequence FG. A compositionally biased stretch (low complexity) spans 17–30; that stretch reads TSTPTSTPAQPSSS. One copy of the GLFG 1 repeat lies at 39–42; sequence GLFG. The stretch at 79–80 is one FG 2 repeat; it reads FG. A GLFG 2 repeat occupies 89 to 92; it reads GLFG. An FG 3 repeat occupies 106 to 107; it reads FG. The segment at 133 to 165 is disordered; that stretch reads QNGGLFGNSNNNNITSTTQNGGLFGKPTTTPAG. 4 GLFG repeats span residues 136–139, 154–157, 168–171, and 181–184; these read GLFG. Residues 139 to 164 are compositionally biased toward low complexity; sequence GNSNNNNITSTTQNGGLFGKPTTTPA. The GLFG 7; approximate repeat unit spans residues 193–196; that stretch reads GIFG. One copy of the GLFG 8 repeat lies at 206-209; it reads GLFG. A disordered region spans residues 249–278; the sequence is TSSLSDVNGKSDAEPKPIENRRTYSFSSSV. Over residues 257–270 the composition is skewed to basic and acidic residues; that stretch reads GKSDAEPKPIENRR. Position 273 is a phosphoserine (Ser273). Residues 369-385 carry the Bipartite nuclear localization signal motif; sequence RKLKIDSNRSAAKKLKL. A disordered region spans residues 390–450; sequence PAITKKHMQD…NLNKQDGENT (61 aa). Residues 398–523 form a required for autocatalytic cleavage region; it reads QDEQDSSENE…FGKIVIFRSS (126 aa). A phosphoserine mark is found at Ser403, Ser404, and Ser414. Residues 418–427 are compositionally biased toward basic and acidic residues; sequence IDRKENRDNN. Residues 428–444 show a composition bias toward polar residues; it reads LDNTYLNGKEQSNNLNK. A Peptidase S59 domain is found at 458-605; the sequence is SFGYWCSPSP…GTWTFKVNHF (148 aa). The tract at residues 460–604 is nucleoporin RNA-binding motif (NRM); it reads GYWCSPSPEQ…GGTWTFKVNH (145 aa). Residues Ser667, Ser679, and Ser689 each carry the phosphoserine modification. Thr751 is subject to Phosphothreonine.

Belongs to the nucleoporin GLFG family. In terms of assembly, component of the nuclear pore complex (NPC). NPC constitutes the exclusive means of nucleocytoplasmic transport. NPCs allow the passive diffusion of ions and small molecules and the active, nuclear transport receptor-mediated bidirectional transport of macromolecules such as proteins, RNAs, ribonucleoparticles (RNPs), and ribosomal subunits across the nuclear envelope. Due to its 8-fold rotational symmetry, all subunits are present with 8 copies or multiples thereof. NUP145C is part of the heptameric 0.5 MDa autoassembling NUP84 NPC subcomplex (NUP84, NUP85, NUP120, NUP133, NUP145C, SEC13 and SEH1). NUP145N may bind homomeric RNA and interacts through its FG repeats with karyopherins. Interacts with MLP1 and MLP2. In terms of processing, NUP145 is autocatalytically cleaved in NUP145N and NUP145C.

The protein localises to the nucleus. It is found in the nuclear pore complex. It localises to the nucleus membrane. In terms of biological role, functions as a component of the nuclear pore complex (NPC). NPC components, collectively referred to as nucleoporins (NUPs), can play the role of both NPC structural components and of docking or interaction partners for transiently associated nuclear transport factors. Active directional transport is assured by both, a Phe-Gly (FG) repeat affinity gradient for these transport factors across the NPC and a transport cofactor concentration gradient across the nuclear envelope (GSP1 and GSP2 GTPases associated predominantly with GTP in the nucleus, with GDP in the cytoplasm). NUP145 is autocatalytically cleaved in vivo in 2 polypeptides which assume different functions in the NPC. NUP145N as one of the FG repeat nucleoporins participates in karyopherin interactions and contains part of the autocatalytic cleavage activity. NUP145C as part of the NUP84 complex is involved in nuclear poly(A)+ RNA and tRNA export. It is also required for normal NPC distribution (probably through interactions with MLP1 and MLP2) and NPC assembly, as well as for normal nuclear envelope organization. This chain is Nucleoporin NUP145 (NUP145), found in Saccharomyces cerevisiae (strain ATCC 204508 / S288c) (Baker's yeast).